Reading from the N-terminus, the 353-residue chain is Ribosome biogenesis protein BRX1 homolog (353 aa).

The span at 1–10 (MAATKRKRRG) shows a compositional bias: basic residues. Residues 1–46 (MAATKRKRRGGLAVQAKKLKRDAKDGKLPAKANDVSEEAAEEEKDR) are disordered. In terms of domain architecture, Brix spans 60–249 (ERILIFSSRG…LIKIFQGSFG (190 aa)). K160 is covalently cross-linked (Glycyl lysine isopeptide (Lys-Gly) (interchain with G-Cter in SUMO2)). At S261 the chain carries Phosphoserine. An N6-acetyllysine modification is found at K276. Glycyl lysine isopeptide (Lys-Gly) (interchain with G-Cter in SUMO2) cross-links involve residues K314 and K322.

The protein belongs to the BRX1 family.

It localises to the nucleus. The protein localises to the nucleolus. Functionally, required for biogenesis of the 60S ribosomal subunit. This chain is Ribosome biogenesis protein BRX1 homolog (BRIX1), found in Bos taurus (Bovine).